The chain runs to 20 residues: Cupiennin-6f (20 aa).

In terms of tissue distribution, expressed by the venom gland.

The protein localises to the secreted. The chain is Cupiennin-6f from Cupiennius salei (American wandering spider).